A 348-amino-acid chain; its full sequence is Small ribosomal subunit biogenesis GTPase RsgA (348 aa).

Residues 72–230 (RNQLSRPAIA…IADTPGFNQP (159 aa)) enclose the CP-type G domain. GTP-binding positions include 121–124 (TKAD) and 172–180 (GPSGVGKSS). Zn(2+) contacts are provided by C255, C260, H262, and C268. Residues 305–322 (AKSDRQGQQRLEPLLDAK) show a composition bias toward basic and acidic residues. Residues 305-348 (AKSDRQGQQRLEPLLDAKKYRRRSRRQQHQHVNPMAEEVLDSEW) are disordered. Positions 323–333 (KYRRRSRRQQH) are enriched in basic residues.

Belongs to the TRAFAC class YlqF/YawG GTPase family. RsgA subfamily. Monomer. Associates with 30S ribosomal subunit, binds 16S rRNA. Zn(2+) serves as cofactor.

The protein resides in the cytoplasm. Functionally, one of several proteins that assist in the late maturation steps of the functional core of the 30S ribosomal subunit. Helps release RbfA from mature subunits. May play a role in the assembly of ribosomal proteins into the subunit. Circularly permuted GTPase that catalyzes slow GTP hydrolysis, GTPase activity is stimulated by the 30S ribosomal subunit. The chain is Small ribosomal subunit biogenesis GTPase RsgA from Thermosynechococcus vestitus (strain NIES-2133 / IAM M-273 / BP-1).